Reading from the N-terminus, the 512-residue chain is L-aspartate oxidase (512 aa).

FAD is bound by residues 17–20 (SGLA) and 46–53 (SSAWAQGG). Arg278 functions as the Proton donor/acceptor in the catalytic mechanism. FAD contacts are provided by residues Glu361 and 377–378 (SL).

The protein belongs to the FAD-dependent oxidoreductase 2 family. NadB subfamily. FAD serves as cofactor.

It is found in the cytoplasm. It catalyses the reaction L-aspartate + O2 = iminosuccinate + H2O2. It participates in cofactor biosynthesis; NAD(+) biosynthesis; iminoaspartate from L-aspartate (oxidase route): step 1/1. Catalyzes the oxidation of L-aspartate to iminoaspartate, the first step in the de novo biosynthesis of NAD(+). This is L-aspartate oxidase (nadB) from Xylella fastidiosa (strain Temecula1 / ATCC 700964).